A 430-amino-acid polypeptide reads, in one-letter code: Synaptotagmin-11 (430 aa).

Over 1 to 15 (MAEITNIRPSFDVSP) the chain is Vesicular. The chain crosses the membrane as a helical span at residues 16-36 (VAAGLIGASVLVVCVSVTVFV). At 37–430 (WTCCHQQAEK…VAKWHSLSEY (394 aa)) the chain is on the cytoplasmic side. A disordered region spans residues 132–154 (RSPMTSLTPGESKPTSPSSPEED). Phosphoserine is present on Ser133. Over residues 140–150 (PGESKPTSPSS) the composition is skewed to low complexity. C2 domains follow at residues 156–278 (MLGS…QLTR) and 290–425 (SRGE…AKWH). Ca(2+)-binding residues include Asp249, Ser252, and Asp255.

It belongs to the synaptotagmin family. In terms of assembly, homodimer. Can also form heterodimers. Interacts with PRKN. Interacts (via C2 2 domain) with AGO2 and SND1; the interaction with SND1 is direct. Interacts with KIF1A; the interaction increases in presence of calcium. Requires Ca(2+) as cofactor. Post-translationally, ubiquitinated, at least by PRKN, and targeted to the proteasome complex for degradation. Ubiquitination is inhibited by ATP13A2. In terms of tissue distribution, highly expressed in brain and at lower levels in other tissues.

Its subcellular location is the cytoplasmic vesicle membrane. The protein resides in the perikaryon. It is found in the golgi apparatus. It localises to the trans-Golgi network membrane. The protein localises to the recycling endosome membrane. Its subcellular location is the lysosome membrane. The protein resides in the cytoplasmic vesicle. It is found in the phagosome. It localises to the cell projection. The protein localises to the axon. Its subcellular location is the dendrite. The protein resides in the postsynaptic density. It is found in the clathrin-coated vesicle membrane. Functionally, synaptotagmin family member involved in vesicular and membrane trafficking which does not bind Ca(2+). Inhibits clathrin-mediated and bulk endocytosis in neurons, functions to ensure precision in vesicle retrieval. Plays an important role in dopamine transmission by regulating endocytosis and the vesicle-recycling process. Essential component of a neuronal vesicular trafficking pathway that differs from the synaptic vesicle trafficking pathway but is crucial for development and synaptic plasticity. In macrophages and microglia, inhibits the conventional cytokine secretion, of at least IL6 and TNF, and phagocytosis. In astrocytes, regulates lysosome exocytosis, mechanism required for the repair of injured astrocyte cell membrane. Required for the ATP13A2-mediated regulation of the autophagy-lysosome pathway. This chain is Synaptotagmin-11, found in Rattus norvegicus (Rat).